Consider the following 455-residue polypeptide: Killer cell immunoglobulin-like receptor 3DL2 (455 aa).

An N-terminal signal peptide occupies residues 1–21 (MSLTVVSMACVGFFLLQGAWP). The Extracellular segment spans residues 22-340 (LMGGQDKPFL…SKSGICRHLH (319 aa)). Ig-like C2-type domains are found at residues 42-102 (GGHV…RPHS), 137-202 (GETV…VPHS), and 237-300 (GENV…FRAL). Disulfide bonds link Cys49-Cys95 and Cys144-Cys195. 4 N-linked (GlcNAc...) asparagine glycosylation sites follow: Asn179, Asn239, Asn273, and Asn306. Cysteines 244 and 293 form a disulfide. The helical transmembrane segment at 341–360 (VLIGTSVVIFLFILLLFFLL) threads the bilayer. The Cytoplasmic segment spans residues 361–455 (YRWCSNKKNA…APQSGLEGVF (95 aa)).

Belongs to the immunoglobulin superfamily. In terms of assembly, interacts with peptide-free HLA-F open conformer. In terms of tissue distribution, expressed in astrocytes.

The protein resides in the cell membrane. In terms of biological role, receptor on natural killer (NK) cells and T cells for MHC class I molecules. Upon binding of peptide-free HLA-F open conformer, negatively regulates NK and T cell effector functions. Acts as a receptor on astrocytes for HLA-F. Through interaction with HLA-F, may protect motor neurons from astrocyte-induced toxicity. The polypeptide is Killer cell immunoglobulin-like receptor 3DL2 (Homo sapiens (Human)).